We begin with the raw amino-acid sequence, 173 residues long: ATP synthase subunit b (173 aa).

The helical transmembrane segment at 12–32 (LDVNPGLVVWTLVTFLVVVLV) threads the bilayer.

The protein belongs to the ATPase B chain family. F-type ATPases have 2 components, F(1) - the catalytic core - and F(0) - the membrane proton channel. F(1) has five subunits: alpha(3), beta(3), gamma(1), delta(1), epsilon(1). F(0) has three main subunits: a(1), b(2) and c(10-14). The alpha and beta chains form an alternating ring which encloses part of the gamma chain. F(1) is attached to F(0) by a central stalk formed by the gamma and epsilon chains, while a peripheral stalk is formed by the delta and b chains.

It localises to the cell inner membrane. In terms of biological role, f(1)F(0) ATP synthase produces ATP from ADP in the presence of a proton or sodium gradient. F-type ATPases consist of two structural domains, F(1) containing the extramembraneous catalytic core and F(0) containing the membrane proton channel, linked together by a central stalk and a peripheral stalk. During catalysis, ATP synthesis in the catalytic domain of F(1) is coupled via a rotary mechanism of the central stalk subunits to proton translocation. Functionally, component of the F(0) channel, it forms part of the peripheral stalk, linking F(1) to F(0). The polypeptide is ATP synthase subunit b (Leptospira interrogans serogroup Icterohaemorrhagiae serovar copenhageni (strain Fiocruz L1-130)).